The chain runs to 1093 residues: Leucine-rich repeats and immunoglobulin-like domains protein 1 (1093 aa).

Positions 1 to 34 are cleaved as a signal peptide; the sequence is MARPVRGGLGAPRRSPCLLLLWLLLLRLEPVTAA. One can recognise an LRRNT domain in the interval 35 to 68; the sequence is AGPRAPCAAACTCAGDSLDCGGRGLAALPGDLPS. Topologically, residues 35 to 794 are extracellular; it reads AGPRAPCAAA…GCRKDGTTVG (760 aa). Cysteines 45 and 54 form a disulfide. LRR repeat units follow at residues 69 to 90, 93 to 114, 116 to 137, 140 to 161, 164 to 185, 189 to 210, 212 to 233, 236 to 257, 260 to 281, 284 to 305, 308 to 329, 332 to 353, 356 to 378, 383 to 404, and 407 to 428; these read WTRS…GFED, NLQE…GAAS, HVVS…QLKA, SLEV…CFPH, PIKE…AFDG, SLLT…AFKL, RLTQ…TFQG, SLEV…AFWG, KMHV…SLYG, ALHQ…GWSF, KLHE…SLAE, SLSV…AFKG, SLRV…SGAF, SLSK…AFSG, and GLEH…AFVK. Asparagine 74 carries N-linked (GlcNAc...) asparagine glycosylation. A glycan (N-linked (GlcNAc...) asparagine) is linked at asparagine 150. N-linked (GlcNAc...) asparagine glycosylation occurs at asparagine 246. N-linked (GlcNAc...) asparagine glycans are attached at residues asparagine 292 and asparagine 318. The region spanning 440-491 is the LRRCT domain; the sequence is DSFLCDCQLKWLPPWLIGRMLQAFVTATCAHPESLKGQSIFSVPPESFVCDD. 4 cysteine pairs are disulfide-bonded: cysteine 444–cysteine 468, cysteine 446–cysteine 489, cysteine 516–cysteine 577, and cysteine 620–cysteine 672. Ig-like C2-type domains are found at residues 495–594, 599–688, and 693–779; these read PQII…ARLT, PSFT…ATLT, and PSLV…SQLS. A glycan (N-linked (GlcNAc...) asparagine) is linked at asparagine 684. A disulfide bridge links cysteine 714 with cysteine 763. Residues 795-815 traverse the membrane as a helical segment; the sequence is IFTIAVVSSIVLTSLVWVCII. At 816–1093 the chain is on the cytoplasmic side; the sequence is YQTRKKSEEY…RVPLLLAPKS (278 aa). Disordered regions lie at residues 946-983 and 1063-1093; these read AFHP…CSRT and PKAC…APKS.

Interacts (via extracellular LRR and Ig-like domains) with EGFR/ERBB1, ERBB2, ERBB3 and ERBB4 (via extracellular domain). The physiological relevance of the interaction is controversial; LRIG1 may have low affinity for EGFR, and interaction may occur only when high levels of both proteins are present. Widely expressed.

It localises to the cell membrane. In terms of biological role, acts as a feedback negative regulator of signaling by receptor tyrosine kinases, through a mechanism that involves enhancement of receptor ubiquitination and accelerated intracellular degradation. The chain is Leucine-rich repeats and immunoglobulin-like domains protein 1 from Homo sapiens (Human).